The primary structure comprises 341 residues: Putative amino-acid ABC transporter-binding protein YhdW (341 aa).

The N-terminal stretch at 1-19 is a signal peptide; that stretch reads MKKMMIATLAAASVLLAVA.

The protein belongs to the bacterial solute-binding protein 3 family.

It is found in the periplasm. In terms of biological role, probably part of the binding-protein-dependent transport system YdhWXYZ for an amino acid. This chain is Putative amino-acid ABC transporter-binding protein YhdW (yhdW), found in Escherichia coli (strain K12).